A 380-amino-acid polypeptide reads, in one-letter code: Septin homolog spn6 (380 aa).

In terms of domain architecture, Septin-type G spans 27-297 (KECGLTIMLC…ERYRREQLTN (271 aa)). The segment at 37–44 (GASGTGKT) is G1 motif. Residues 37–44 (GASGTGKT), Thr-72, Gly-98, 177–185 (KADTFTTPE), and Arg-246 each bind GTP. Positions 95-98 (DTPG) are G3 motif. The segment at 176–179 (AKAD) is G4 motif. A coiled-coil region spans residues 304–380 (KLKKEHYERL…KSYKGRGHKK (77 aa)).

It belongs to the TRAFAC class TrmE-Era-EngA-EngB-Septin-like GTPase superfamily. Septin GTPase family. In terms of assembly, component of the sporulation-specific septin complex composed of at least spn2, spn5, spn6 and spn7.

The protein resides in the cytoplasm. The protein localises to the forespore membrane. Its function is as follows. Septin-like protein involved in the correct orientation of forespore membrane extension during sporulation. This Schizosaccharomyces pombe (strain 972 / ATCC 24843) (Fission yeast) protein is Septin homolog spn6 (spn6).